The primary structure comprises 136 residues: Small ribosomal subunit protein uS9 (136 aa).

Residues 96–136 form a disordered region; sequence LSPDNRKPLKTEGHLSRDPRAKERRKYGLKKARKAPQFSKR. Over residues 98-116 the composition is skewed to basic and acidic residues; that stretch reads PDNRKPLKTEGHLSRDPRA. A compositionally biased stretch (basic residues) spans 117 to 136; sequence KERRKYGLKKARKAPQFSKR.

Belongs to the universal ribosomal protein uS9 family.

This Prochlorococcus marinus (strain MIT 9515) protein is Small ribosomal subunit protein uS9.